Here is a 153-residue protein sequence, read N- to C-terminus: Large ribosomal subunit protein uL15 (153 aa).

Residues 21 to 41 form a disordered region; sequence RGIGSGKGKTGGRGIKGQKSR. Over residues 23–35 the composition is skewed to gly residues; the sequence is IGSGKGKTGGRGI.

The protein belongs to the universal ribosomal protein uL15 family. As to quaternary structure, part of the 50S ribosomal subunit.

Functionally, binds to the 23S rRNA. The protein is Large ribosomal subunit protein uL15 of Rickettsia africae (strain ESF-5).